We begin with the raw amino-acid sequence, 435 residues long: Minor fimbrial subunit HifE (435 aa).

An N-terminal signal peptide occupies residues 1-31 (MKTLTTYAKYFTPISKIAFLFCFLMGNIAEA).

The protein belongs to the fimbrial protein family.

The protein resides in the fimbrium. Its function is as follows. May be a minor structural protein required for pilus biogenesis. May be the adhesive component in the pili. This is Minor fimbrial subunit HifE (hifE) from Haemophilus influenzae.